We begin with the raw amino-acid sequence, 146 residues long: Globin (146 aa).

Alanine 1 is modified (N-acetylalanine). One can recognise a Globin domain in the interval 1-146; sequence ALSAAEAEVV…IIDAMKKAGK (146 aa). Residue histidine 95 participates in heme b binding.

It belongs to the globin family. As to quaternary structure, monomer.

The sequence is that of Globin from Dolabella auricularia (Shoulderblade sea cat).